Consider the following 182-residue polypeptide: MALDAVVEDILATSKSKVAEINAETEQEVARILSEARERAAEIKSRKEAEAKHDIEALVRREMSSANLELKRAELNVHKEVLEQVRIKFLDAVTNLPKDKNEALIKKLLEPYDLKDMKVYSSKRDQAFVSSLVPNYGGTLDIIGGVVVESKDGSVRFDHSYETLARDIFNAKVKEVSKLLFG.

The protein belongs to the V-ATPase E subunit family. In terms of assembly, has multiple subunits with at least A(3), B(3), C, D, E, F, H, I and proteolipid K(x).

The protein localises to the cell membrane. Its function is as follows. Component of the A-type ATP synthase that produces ATP from ADP in the presence of a proton gradient across the membrane. This is A-type ATP synthase subunit E from Methanothrix thermoacetophila (strain DSM 6194 / JCM 14653 / NBRC 101360 / PT) (Methanosaeta thermophila).